Here is a 172-residue protein sequence, read N- to C-terminus: Shikimate kinase (172 aa).

11 to 16 (GAGKST) contributes to the ATP binding site. Ser15 contacts Mg(2+). 3 residues coordinate substrate: Asp33, Arg57, and Gly79. Arg117 serves as a coordination point for ATP. Arg136 serves as a coordination point for substrate. Arg153 contributes to the ATP binding site.

This sequence belongs to the shikimate kinase family. In terms of assembly, monomer. Requires Mg(2+) as cofactor.

The protein localises to the cytoplasm. The catalysed reaction is shikimate + ATP = 3-phosphoshikimate + ADP + H(+). It functions in the pathway metabolic intermediate biosynthesis; chorismate biosynthesis; chorismate from D-erythrose 4-phosphate and phosphoenolpyruvate: step 5/7. Its function is as follows. Catalyzes the specific phosphorylation of the 3-hydroxyl group of shikimic acid using ATP as a cosubstrate. This chain is Shikimate kinase, found in Pseudomonas savastanoi pv. phaseolicola (strain 1448A / Race 6) (Pseudomonas syringae pv. phaseolicola (strain 1448A / Race 6)).